Consider the following 147-residue polypeptide: SsrA-binding protein (147 aa).

Belongs to the SmpB family.

It is found in the cytoplasm. Required for rescue of stalled ribosomes mediated by trans-translation. Binds to transfer-messenger RNA (tmRNA), required for stable association of tmRNA with ribosomes. tmRNA and SmpB together mimic tRNA shape, replacing the anticodon stem-loop with SmpB. tmRNA is encoded by the ssrA gene; the 2 termini fold to resemble tRNA(Ala) and it encodes a 'tag peptide', a short internal open reading frame. During trans-translation Ala-aminoacylated tmRNA acts like a tRNA, entering the A-site of stalled ribosomes, displacing the stalled mRNA. The ribosome then switches to translate the ORF on the tmRNA; the nascent peptide is terminated with the 'tag peptide' encoded by the tmRNA and targeted for degradation. The ribosome is freed to recommence translation, which seems to be the essential function of trans-translation. In Mycoplasma pneumoniae (strain ATCC 29342 / M129 / Subtype 1) (Mycoplasmoides pneumoniae), this protein is SsrA-binding protein.